A 356-amino-acid polypeptide reads, in one-letter code: Protein-L-isoaspartate O-methyltransferase domain-containing protein 1 (356 aa).

Residue Gly2 is the site of N-myristoyl glycine attachment. Ser64 is an active-site residue. 3 adoMet binding motif regions span residues 85-94 (LNLGSGTGYL), 160-164 (YDRIY), and 181-191 (LKVGGILVMPI). Residues 240–250 (VRNLQDLARIY) are BC-box. The segment at 299–331 (PLDSEEDEKMEEDKEEEEKEPGEALKPEEPPQN) is disordered. The span at 301 to 318 (DSEEDEKMEEDKEEEEKE) shows a compositional bias: acidic residues. The segment covering 319 to 331 (PGEALKPEEPPQN) has biased composition (basic and acidic residues). Residues 340-343 (LPLP) form a CUL-box region.

It belongs to the methyltransferase superfamily. L-isoaspartyl/D-aspartyl protein methyltransferase family. As to quaternary structure, component of the probable ECS(PCMTD1) E3 ubiquitin-protein ligase complex, at least composed of CUL5, ELOB, ELOC, RBX2 and PCMTD1. Interacts (via the BC-box) with ELOB and ELOC; the interaction is direct and stabilizes PCMTD1.

The protein localises to the cytoplasm. It localises to the membrane. Substrate recognition component of an ECS (Elongin BC-CUL5-SOCS-box protein) E3 ubiquitin ligase complex which mediates the ubiquitination and subsequent proteasomal degradation of target proteins. Specifically binds to the methyltransferase cofactor S-adenosylmethionine (AdoMet) via the N-terminal AdoMet binding motif, but does not display methyltransferase activity. May provide an alternate maintenance pathway for modified proteins by acting as a damage-specific E3 ubiquitin ligase adaptor protein. This is Protein-L-isoaspartate O-methyltransferase domain-containing protein 1 (PCMTD1) from Bos taurus (Bovine).